The chain runs to 183 residues: Capsid protein (183 aa).

The tract at residues 136-183 (NAPILSTLPETTVVRRRGRSPRRRTPSPRRRRSQSPRRRRSQSPASQC) is disordered. Residues 149–176 (VRRRGRSPRRRTPSPRRRRSQSPRRRRS) show a composition bias toward basic residues. Ser155, Ser162, and Ser170 each carry phosphoserine; by host. The 1; half-length repeat unit spans residues 155–161 (SPRRRTP). The tract at residues 155-177 (SPRRRTPSPRRRRSQSPRRRRSQ) is 3 X 8 AA repeats of S-P-R-R-R-[PR]-S-Q. The Bipartite nuclear localization signal motif lies at 158–175 (RRTPSPRRRRSQSPRRRR). Repeat copies occupy residues 162 to 169 (SPRRRRSQ) and 170 to 177 (SPRRRRSQ). Residues 177-183 (QSPASQC) form an RNA binding region.

Belongs to the orthohepadnavirus core antigen family. As to quaternary structure, homodimerizes, then multimerizes. Interacts with cytosol exposed regions of viral L glycoprotein present in the reticulum-to-Golgi compartment. Interacts with human FLNB. Phosphorylated form interacts with host importin alpha; this interaction depends on the exposure of the NLS, which itself depends upon genome maturation and/or phosphorylation of the capsid protein. Interacts with host NUP153. Phosphorylated by host SRPK1, SRPK2, and maybe protein kinase C or GAPDH. Phosphorylation is critical for pregenomic RNA packaging. Protein kinase C phosphorylation is stimulated by HBx protein and may play a role in transport of the viral genome to the nucleus at the late step during the viral replication cycle.

It localises to the virion. The protein resides in the host cytoplasm. Functionally, self assembles to form an icosahedral capsid. Most capsids appear to be large particles with an icosahedral symmetry of T=4 and consist of 240 copies of capsid protein, though a fraction forms smaller T=3 particles consisting of 180 capsid proteins. Entering capsids are transported along microtubules to the nucleus. Phosphorylation of the capsid is thought to induce exposure of nuclear localization signal in the C-terminal portion of the capsid protein that allows binding to the nuclear pore complex via the importin (karyopherin-) alpha and beta. Capsids are imported in intact form through the nuclear pore into the nuclear basket, where it probably binds NUP153. Only capsids that contain the mature viral genome can release the viral DNA and capsid protein into the nucleoplasm. Immature capsids get stuck in the basket. Capsids encapsulate the pre-genomic RNA and the P protein. Pre-genomic RNA is reverse-transcribed into DNA while the capsid is still in the cytoplasm. The capsid can then either be directed to the nucleus, providing more genomes for transcription, or bud through the endoplasmic reticulum to provide new virions. This chain is Capsid protein, found in Hylobatidae (gibbons).